The sequence spans 628 residues: ATP-dependent RNA helicase mrh4, mitochondrial (628 aa).

A mitochondrion-targeting transit peptide spans 1–40 (MSLAVRPPVCLLCRSGAPTLLPSSVSQVARSMATARLRRK). A disordered region spans residues 51–109 (AKSSINQKRSGKAKFGPWSGMNQTEAHIRGEPRSRSQAALRRSGEKAADTPRKSDSPLY). Over residues 92 to 105 (RSGEKAADTPRKSD) the composition is skewed to basic and acidic residues. A Q motif motif is present at residues 137–170 (TSFDHFPLLPVVRHSIFSQALPGLVDVTPTPIQR). The Helicase ATP-binding domain maps to 190-402 (EDGDPQYDQY…RKRYPDIKRL (213 aa)). Position 203-210 (203-210 (AETGSGKT)) interacts with ATP. Residues 228-253 (DKENERKEEERKAKEKEERLKNRAFD) are compositionally biased toward basic and acidic residues. Positions 228–260 (DKENERKEEERKAKEKEERLKNRAFDLEPEEPP) are disordered. Positions 349–352 (DEAD) match the DEAD box motif. In terms of domain architecture, Helicase C-terminal spans 456–628 (YVGPNIKKIL…EGMFRGQALI (173 aa)).

It belongs to the DEAD box helicase family. MRH4 subfamily.

It localises to the mitochondrion. It carries out the reaction ATP + H2O = ADP + phosphate + H(+). ATP-binding RNA helicase involved in mitochondrial RNA metabolism. Required for maintenance of mitochondrial DNA. The chain is ATP-dependent RNA helicase mrh4, mitochondrial (mrh4) from Aspergillus oryzae (strain ATCC 42149 / RIB 40) (Yellow koji mold).